A 346-amino-acid chain; its full sequence is Phosphoribosylformylglycinamidine cyclo-ligase (346 aa).

This sequence belongs to the AIR synthase family.

The protein localises to the cytoplasm. It catalyses the reaction 2-formamido-N(1)-(5-O-phospho-beta-D-ribosyl)acetamidine + ATP = 5-amino-1-(5-phospho-beta-D-ribosyl)imidazole + ADP + phosphate + H(+). The protein operates within purine metabolism; IMP biosynthesis via de novo pathway; 5-amino-1-(5-phospho-D-ribosyl)imidazole from N(2)-formyl-N(1)-(5-phospho-D-ribosyl)glycinamide: step 2/2. The polypeptide is Phosphoribosylformylglycinamidine cyclo-ligase (Prochlorococcus marinus (strain NATL1A)).